The sequence spans 55 residues: uncharacterized protein (55 aa).

This is an uncharacterized protein from Thermoproteus tenax (TTV1).